A 306-amino-acid polypeptide reads, in one-letter code: MSGKHVAVLMGGFSSERPVSLSSGAACADALEAEGYRVSRVDVGRDVAAVLADLRPDIVFNALHGPFGEDGTIQGILEYLEIPYTHSGVLASALAMDKAQAKHVAKAAGIPVADALIMDRREFGNAHPMKPPYVVKPVREGSSFGVVIVKEDQSHPPQVITSSEWRYGDRVMVERYIAGRELTCGVMGDVALGVTEIIPQGHAFYDYDSKYVKGGSAHVIPAQISPNIYQKIQSLAVKAHQAIGCRGVSRSDFRFDDRGEGELIWLEINTQPGMTPTSLVPEMAQHAGLQFGEFLRWMVEDASCLR.

The ATP-grasp domain maps to 102 to 300 (KHVAKAAGIP…FGEFLRWMVE (199 aa)). An ATP-binding site is contributed by 128-183 (PMKPPYVVKPVREGSSFGVVIVKEDQSHPPQVITSSEWRYGDRVMVERYIAGRELT). Mg(2+) is bound by residues aspartate 252, glutamate 267, and asparagine 269.

Belongs to the D-alanine--D-alanine ligase family. Mg(2+) serves as cofactor. It depends on Mn(2+) as a cofactor.

The protein localises to the cytoplasm. The enzyme catalyses 2 D-alanine + ATP = D-alanyl-D-alanine + ADP + phosphate + H(+). Its pathway is cell wall biogenesis; peptidoglycan biosynthesis. In terms of biological role, cell wall formation. In Sinorhizobium fredii (strain NBRC 101917 / NGR234), this protein is D-alanine--D-alanine ligase.